The chain runs to 379 residues: L-lactate dehydrogenase (379 aa).

The FMN hydroxy acid dehydrogenase domain maps to 1–379 (MIISASTDYR…IGRDSLVNLP (379 aa)). Residue Tyr-24 coordinates substrate. Residues Ser-106 and Gln-127 each contribute to the FMN site. A substrate-binding site is contributed by Tyr-129. FMN is bound at residue Thr-155. Arg-164 contacts substrate. Lys-251 provides a ligand contact to FMN. His-275 acts as the Proton acceptor in catalysis. Arg-278 is a binding site for substrate. 306 to 330 (DSGIRTGLDVVRMLALGADTVLLGR) is a binding site for FMN.

It belongs to the FMN-dependent alpha-hydroxy acid dehydrogenase family. FMN serves as cofactor.

The protein localises to the cell inner membrane. It carries out the reaction (S)-lactate + A = pyruvate + AH2. In terms of biological role, catalyzes the conversion of L-lactate to pyruvate. Is coupled to the respiratory chain. The chain is L-lactate dehydrogenase from Stenotrophomonas maltophilia (strain R551-3).